The sequence spans 661 residues: Transcription factor ccg-8 (661 aa).

Positions Met-1–His-11 are enriched in basic residues. Disordered regions lie at residues Met-1 to Asn-69, Ser-107 to Pro-243, Leu-255 to Gln-279, and Arg-354 to Ser-398. 2 stretches are compositionally biased toward low complexity: residues His-23–Gln-43 and Ser-107–Arg-140. Positions Asp-173–Ser-187 are enriched in polar residues. Residues Gln-192 to Phe-203 are compositionally biased toward pro residues. The span at Ser-357–Gln-366 shows a compositional bias: basic and acidic residues.

Functionally, transcription factor that plays a pivotal role in azole adaptive responses by regulating the drug accumulation in the cells. Affects the transcriptional responses to ketoconazole of many genes, including the target gene (erg11), an azole transporter gene (cdr4), a hexose transporter gene (hxt13), a stress response gene (kts-1), two transcription factor genes (named kts-2 and fsd-1/ndt80). Also regulates phospholipid synthesis that is not involved in azole resistance. The polypeptide is Transcription factor ccg-8 (Neurospora crassa (strain ATCC 24698 / 74-OR23-1A / CBS 708.71 / DSM 1257 / FGSC 987)).